Reading from the N-terminus, the 564-residue chain is Pachytene checkpoint protein 2 (564 aa).

314 to 321 (GPPGTGKT) lines the ATP pocket.

Belongs to the AAA ATPase family. PCH2 subfamily.

The protein localises to the nucleus. Its subcellular location is the nucleolus. It is found in the chromosome. Required for the pachytene checkpoint, the meiotic checkpoint that prevents chromosome segregation when defects in recombination and synaptonemal complex formation occurred. Represses meiotic recombination in the rDNA, probably by excluding the meiosis-specific protein HOP1 from the nucleolar region. The polypeptide is Pachytene checkpoint protein 2 (PCH2) (Saccharomyces cerevisiae (strain ATCC 204508 / S288c) (Baker's yeast)).